The chain runs to 211 residues: Protein-L-isoaspartate O-methyltransferase (211 aa).

Ser60 is an active-site residue.

The protein belongs to the methyltransferase superfamily. L-isoaspartyl/D-aspartyl protein methyltransferase family.

It localises to the cytoplasm. The catalysed reaction is [protein]-L-isoaspartate + S-adenosyl-L-methionine = [protein]-L-isoaspartate alpha-methyl ester + S-adenosyl-L-homocysteine. In terms of biological role, catalyzes the methyl esterification of L-isoaspartyl residues in peptides and proteins that result from spontaneous decomposition of normal L-aspartyl and L-asparaginyl residues. It plays a role in the repair and/or degradation of damaged proteins. In Pseudomonas savastanoi pv. phaseolicola (strain 1448A / Race 6) (Pseudomonas syringae pv. phaseolicola (strain 1448A / Race 6)), this protein is Protein-L-isoaspartate O-methyltransferase.